We begin with the raw amino-acid sequence, 235 residues long: Endonuclease V (235 aa).

Mg(2+) contacts are provided by aspartate 47 and aspartate 117.

Belongs to the endonuclease V family. The cofactor is Mg(2+).

It is found in the cytoplasm. It catalyses the reaction Endonucleolytic cleavage at apurinic or apyrimidinic sites to products with a 5'-phosphate.. Its function is as follows. DNA repair enzyme involved in the repair of deaminated bases. Selectively cleaves double-stranded DNA at the second phosphodiester bond 3' to a deoxyinosine leaving behind the intact lesion on the nicked DNA. This is Endonuclease V from Protochlamydia amoebophila (strain UWE25).